Here is a 637-residue protein sequence, read N- to C-terminus: Chaperone protein HtpG (637 aa).

The segment at 1–345 (MSQQETHGFQ…SNDLPLNVSR (345 aa)) is a; substrate-binding. The tract at residues 346-562 (EILQDNHVTK…EGEMSTQMIK (217 aa)) is b. The c stretch occupies residues 563–637 (LMQAAGQPVP…MNQMLLANMK (75 aa)).

This sequence belongs to the heat shock protein 90 family. As to quaternary structure, homodimer.

Its subcellular location is the cytoplasm. Functionally, molecular chaperone. Has ATPase activity. This Shewanella baltica (strain OS185) protein is Chaperone protein HtpG.